A 490-amino-acid chain; its full sequence is Cytochrome P450 71A25 (490 aa).

Residues 1–21 (MMMMIILLWSIIFMTILFLKK) form a helical membrane-spanning segment. Cysteine 431 contacts heme.

It belongs to the cytochrome P450 family. Heme is required as a cofactor.

The protein localises to the membrane. The protein is Cytochrome P450 71A25 (CYP71A25) of Arabidopsis thaliana (Mouse-ear cress).